A 302-amino-acid chain; its full sequence is Sulfate adenylyltransferase subunit 2 (302 aa).

This sequence belongs to the PAPS reductase family. CysD subfamily. As to quaternary structure, heterodimer composed of CysD, the smaller subunit, and CysN.

The catalysed reaction is sulfate + ATP + H(+) = adenosine 5'-phosphosulfate + diphosphate. It participates in sulfur metabolism; hydrogen sulfide biosynthesis; sulfite from sulfate: step 1/3. Its function is as follows. With CysN forms the ATP sulfurylase (ATPS) that catalyzes the adenylation of sulfate producing adenosine 5'-phosphosulfate (APS) and diphosphate, the first enzymatic step in sulfur assimilation pathway. APS synthesis involves the formation of a high-energy phosphoric-sulfuric acid anhydride bond driven by GTP hydrolysis by CysN coupled to ATP hydrolysis by CysD. This is Sulfate adenylyltransferase subunit 2 from Xanthomonas campestris pv. campestris (strain 8004).